The primary structure comprises 291 residues: ATP synthase gamma chain (291 aa).

Belongs to the ATPase gamma chain family. F-type ATPases have 2 components, CF(1) - the catalytic core - and CF(0) - the membrane proton channel. CF(1) has five subunits: alpha(3), beta(3), gamma(1), delta(1), epsilon(1). CF(0) has three main subunits: a, b and c.

The protein localises to the cell inner membrane. Functionally, produces ATP from ADP in the presence of a proton gradient across the membrane. The gamma chain is believed to be important in regulating ATPase activity and the flow of protons through the CF(0) complex. This is ATP synthase gamma chain from Rhodopseudomonas palustris (strain BisB5).